A 145-amino-acid chain; its full sequence is MIGLVQRVKQAAVEIDQLPVCAIGRGILLFLAIEKGDNEKNGDLLIEKVLNCRIFSDQSGKMNLSLLDIRGELLIVPEFTLAGKIAKGKRPSFDMAAPAEVAKKLFDYVSGQIENKYKAVKKGYFGADMSVYLINDGPVTFWLKC.

The short motif at 137-138 (GP) is the Gly-cisPro motif, important for rejection of L-amino acids element.

This sequence belongs to the DTD family. Homodimer.

The protein resides in the cytoplasm. It catalyses the reaction glycyl-tRNA(Ala) + H2O = tRNA(Ala) + glycine + H(+). The enzyme catalyses a D-aminoacyl-tRNA + H2O = a tRNA + a D-alpha-amino acid + H(+). In terms of biological role, an aminoacyl-tRNA editing enzyme that deacylates mischarged D-aminoacyl-tRNAs. Also deacylates mischarged glycyl-tRNA(Ala), protecting cells against glycine mischarging by AlaRS. Acts via tRNA-based rather than protein-based catalysis; rejects L-amino acids rather than detecting D-amino acids in the active site. By recycling D-aminoacyl-tRNA to D-amino acids and free tRNA molecules, this enzyme counteracts the toxicity associated with the formation of D-aminoacyl-tRNA entities in vivo and helps enforce protein L-homochirality. The polypeptide is D-aminoacyl-tRNA deacylase (Methylacidiphilum infernorum (isolate V4) (Methylokorus infernorum (strain V4))).